Reading from the N-terminus, the 365-residue chain is Solute carrier family 35 member G1 (365 aa).

Residues Met1 to Ala33 are disordered. The segment covering Ala23 to Ala33 has biased composition (low complexity). Helical transmembrane passes span Gly69 to Val89, Ala97 to Ile117, Ile131 to Tyr151, Leu156 to Ile176, Ala187 to Phe207, Leu222 to Leu242, Phe252 to Val272, Leu286 to Leu306, Ala311 to Phe333, and Thr338 to Ile357. EamA domains follow at residues Phe80–Arg202 and Val233–Ile357.

It belongs to the TMEM20 family. Interacts with STIM1; stimulated by depletion of intracellular calcium. Interacts with ORAI1. Interacts with the plasma membrane calcium-transporting ATPases ATP2B1 and ATP2B4. Interacts with ATP1A1, ATP2A2, KPNB1 and XPO1. In terms of tissue distribution, ubiquitously expressed.

It localises to the cell membrane. The protein localises to the endoplasmic reticulum membrane. Functionally, may play a role in intracellular calcium sensing and homeostasis. May act as a negative regulator of plasma membrane calcium-transporting ATPases preventing calcium efflux from the cell. The polypeptide is Solute carrier family 35 member G1 (SLC35G1) (Homo sapiens (Human)).